Reading from the N-terminus, the 858-residue chain is Coiled-coil and C2 domain-containing protein 1B (858 aa).

Disordered regions lie at residues 112-164, 180-199, 204-284, 329-352, and 470-533; these read VLGV…GASQ, AAAS…CERG, ESQL…ALLS, VDLS…APTA, and EKLA…SPSV. A compositionally biased stretch (acidic residues) spans 114-143; the sequence is GVDEETEPLDGDEVADPGGSEEENGLEDTE. Positions 153–164 are enriched in low complexity; sequence ASAPAAQAGASQ. Residues 166-212 adopt a coiled-coil conformation; that stretch reads LHALLEERIHNYREAAASAKEAGEAAKARRCERGLKTLESQLASVRR. Over residues 186-199 the composition is skewed to basic and acidic residues; sequence EAGEAAKARRCERG. Ser-209 is modified (phosphoserine). Low complexity predominate over residues 520–532; the sequence is PRASSSKESPSPS. At Ser-593 the chain carries Phosphoserine. Thr-596 is modified (phosphothreonine). Positions 611-635 form a coiled coil; the sequence is RLSQKAEEVYAQLQKMLLEQQEKCL. Residues 676–815 form the C2 domain; that stretch reads DPPTHHFELK…ENECEIREIV (140 aa).

It belongs to the CC2D1 family. In terms of assembly, interacts with CHMP4B. Widely distributed in brain and peripheral tissues.

The protein localises to the nucleus. Transcription factor that binds specifically to the DRE (dual repressor element) and represses HTR1A gene transcription in neuronal cells. This is Coiled-coil and C2 domain-containing protein 1B (CC2D1B) from Homo sapiens (Human).